A 290-amino-acid chain; its full sequence is Phycobilisome 32.3 kDa linker polypeptide, phycocyanin-associated, rod (290 aa).

A PBS-linker domain is found at 1-179; that stretch reads MPVTVAASRL…LQRGYANSDR (179 aa). The CpcD-like domain occupies 236-288; it reads DQVVRVEVAALSTPRYPRIRRSSRVFFVPVSRLSQKLQEIQRMGGRVASISPA.

Belongs to the phycobilisome linker protein family.

It is found in the cellular thylakoid membrane. Rod linker protein, associated with phycocyanin. Linker polypeptides determine the state of aggregation and the location of the disk-shaped phycobiliprotein units within the phycobilisome and modulate their spectroscopic properties in order to mediate a directed and optimal energy transfer. This chain is Phycobilisome 32.3 kDa linker polypeptide, phycocyanin-associated, rod (cpcC), found in Picosynechococcus sp. (strain ATCC 27264 / PCC 7002 / PR-6) (Agmenellum quadruplicatum).